Reading from the N-terminus, the 316-residue chain is HPr kinase/phosphorylase (316 aa).

Residues His143 and Lys164 contribute to the active site. Gly158–Ser165 serves as a coordination point for ATP. Ser165 serves as a coordination point for Mg(2+). Catalysis depends on Asp182, which acts as the Proton acceptor; for phosphorylation activity. Proton donor; for dephosphorylation activity. The segment at Leu206–Asn215 is important for the catalytic mechanism of both phosphorylation and dephosphorylation. Glu207 contacts Mg(2+). Residue Arg251 is part of the active site. The segment at Pro272–Arg277 is important for the catalytic mechanism of dephosphorylation.

This sequence belongs to the HPrK/P family. In terms of assembly, homohexamer. The cofactor is Mg(2+).

The catalysed reaction is [HPr protein]-L-serine + ATP = [HPr protein]-O-phospho-L-serine + ADP + H(+). The enzyme catalyses [HPr protein]-O-phospho-L-serine + phosphate + H(+) = [HPr protein]-L-serine + diphosphate. In terms of biological role, catalyzes the ATP- as well as the pyrophosphate-dependent phosphorylation of a specific serine residue in HPr, a phosphocarrier protein of the phosphoenolpyruvate-dependent sugar phosphotransferase system (PTS). HprK/P also catalyzes the pyrophosphate-producing, inorganic phosphate-dependent dephosphorylation (phosphorolysis) of seryl-phosphorylated HPr (P-Ser-HPr). The protein is HPr kinase/phosphorylase of Xanthomonas axonopodis pv. citri (strain 306).